Reading from the N-terminus, the 727-residue chain is Polyribonucleotide nucleotidyltransferase (727 aa).

D488 and D494 together coordinate Mg(2+). Positions 555 to 614 constitute a KH domain; sequence PKLYTMKINPEKIRDVIGKGGATIRALTDETGCQINIEEDGTITIAATEAAKADEAKRRI. The S1 motif domain maps to 624–692; the sequence is GKVYEGPVTK…DKGRVKLSMK (69 aa). A disordered region spans residues 691-727; sequence MKALADRPAGDSGRPAPAERGERRERRDGGASEQQQQ. Residues 707–720 are compositionally biased toward basic and acidic residues; sequence PAERGERRERRDGG.

It belongs to the polyribonucleotide nucleotidyltransferase family. Mg(2+) is required as a cofactor.

It is found in the cytoplasm. The enzyme catalyses RNA(n+1) + phosphate = RNA(n) + a ribonucleoside 5'-diphosphate. Its function is as follows. Involved in mRNA degradation. Catalyzes the phosphorolysis of single-stranded polyribonucleotides processively in the 3'- to 5'-direction. The sequence is that of Polyribonucleotide nucleotidyltransferase from Acidovorax ebreus (strain TPSY) (Diaphorobacter sp. (strain TPSY)).